The following is a 122-amino-acid chain: MIQMQTNLDVADNSGARRVMCIKVLGGSKRKYASIGDVIVVSIKEAIPRGRVKKGDVMKAVVVRTAKDIRRADGSVIRFDTNAAVLIDNKKEPIGTRIFGPVPRELRAKNHMKIISLAPEVL.

The protein belongs to the universal ribosomal protein uL14 family. As to quaternary structure, part of the 50S ribosomal subunit. Forms a cluster with proteins L3 and L19. In the 70S ribosome, L14 and L19 interact and together make contacts with the 16S rRNA in bridges B5 and B8.

Its function is as follows. Binds to 23S rRNA. Forms part of two intersubunit bridges in the 70S ribosome. The chain is Large ribosomal subunit protein uL14 from Rhizobium johnstonii (strain DSM 114642 / LMG 32736 / 3841) (Rhizobium leguminosarum bv. viciae).